The sequence spans 472 residues: WASH complex subunit 1 (472 aa).

Positions 1–51 (MPQNRSVESQAYSLPLILPDLRREEAIHQITDTLQHLQTVSNDIFSRILQR) are required for WASH complex assembly. Disordered stretches follow at residues 294–411 (DRQD…GGDL) and 429–472 (KVPA…DWES). Residues 301–334 (LPPPPPPPPPPPPPPPPEPSALSPPAPPPPPLSI) are compositionally biased toward pro residues. Residues 352–472 (QGAPKEVVNP…GDGDEDDWES (121 aa)) are VCA. The WH2 domain occupies 364-386 (GRASLLESIRQAGGIGKANLRNV). A compositionally biased stretch (basic and acidic residues) spans 385 to 400 (NVKEKKLEKKKMKEQE).

Belongs to the WASH1 family. Component of the WASH complex.

It is found in the early endosome membrane. The protein resides in the recycling endosome membrane. Its function is as follows. Acts as a nucleation-promoting factor at the surface of endosomes, where it recruits and activates the Arp2/3 complex to induce actin polymerization, playing a key role in the fission of tubules that serve as transport intermediates during endosome sorting. The sequence is that of WASH complex subunit 1 from Xenopus laevis (African clawed frog).